The sequence spans 205 residues: MSSTPRPHDLVWLNHASALEAIAEPWVAQQWRAALPVVVRRDVDDQARIPVGVRGMKREQRAAGWVQAHNIVRCVTPEMLVERERLLGSPFVSQPPVQAAIALTLHPWSWRWGVTGSTGYALATEIPVLHAASDLDLLIRAPQPLDREALREWLARVAQLPCRADTQVETPYGAFALNEWLRDGRALLKTSHGARLTATPWHREE.

Residues aspartate 134 and aspartate 136 contribute to the active site.

The protein belongs to the MdcG family.

It catalyses the reaction apo-[malonate decarboxylase ACP] + 2'-(5''-triphospho-alpha-D-ribosyl)-3'-dephospho-CoA = holo-[malonate decarboxylase ACP] + diphosphate. Functionally, transfers 2'-(5-triphosphoribosyl)-3'-dephosphocoenzyme-A to the apo-[acyl-carrier-protein] of the malonate decarboxylase to yield holo-[acyl-carrier-protein]. This chain is Phosphoribosyl-dephospho-CoA transferase, found in Klebsiella pneumoniae (strain 342).